Here is a 101-residue protein sequence, read N- to C-terminus: Small ribosomal subunit protein uS14 (101 aa).

This sequence belongs to the universal ribosomal protein uS14 family. Part of the 30S ribosomal subunit. Contacts proteins S3 and S10.

Functionally, binds 16S rRNA, required for the assembly of 30S particles and may also be responsible for determining the conformation of the 16S rRNA at the A site. The polypeptide is Small ribosomal subunit protein uS14 (Tropheryma whipplei (strain TW08/27) (Whipple's bacillus)).